The chain runs to 234 residues: Ubiquitin thioesterase OTUB2 (234 aa).

The OTU domain maps to 40–231; that stretch reads TSIRKTKGDG…TSHYNILYAA (192 aa). Residue Asp48 is part of the active site. The active-site Nucleophile is the Cys51. Catalysis depends on residues His205 and His224.

This sequence belongs to the peptidase C65 family.

The enzyme catalyses Thiol-dependent hydrolysis of ester, thioester, amide, peptide and isopeptide bonds formed by the C-terminal Gly of ubiquitin (a 76-residue protein attached to proteins as an intracellular targeting signal).. In terms of biological role, hydrolase that can remove conjugated ubiquitin from proteins in vitro and may therefore play an important regulatory role at the level of protein turnover by preventing degradation. Mediates deubiquitination of 'Lys-11'-,'Lys-48'- and 'Lys-63'-linked polyubiquitin chains, with a preference for 'Lys-63'-linked polyubiquitin chains. The chain is Ubiquitin thioesterase OTUB2 (Otub2) from Mus musculus (Mouse).